We begin with the raw amino-acid sequence, 473 residues long: Dynein axonemal assembly factor 11 (473 aa).

LRR repeat units follow at residues Ser-22–Cys-43, Asp-45–Lys-66, Lys-67–Glu-88, and Trp-89–Thr-110. The LRRCT domain occupies Asn-123–Asn-161. Positions Ser-153–Thr-205 form a coiled coil. Basic and acidic residues-rich tracts occupy residues Gln-188–Lys-202 and Glu-273–Ser-283. Disordered regions lie at residues Gln-188–Ser-244, Glu-273–Pro-292, and Val-387–Ile-473. Positions Val-305 to Lys-402 constitute a CS domain. The span at Thr-397–Ser-408 shows a compositional bias: low complexity. Positions Lys-417–Cys-431 are enriched in basic and acidic residues. Acidic residues predominate over residues Pro-456–Pro-467.

This sequence belongs to the tilB family. As to quaternary structure, interacts (via CS domain) with ZMYND10 (via C-terminus). As to expression, mainly expressed in cells with motile cilia. Expressed in epithelial cells of the trachea, testis and ependymal cells of the cerebral ventricles. In testis, abundant expression in late prophase of meiosis I with a dramatic decrease after the first meiotic division (at protein level).

Its subcellular location is the cytoplasm. It is found in the cell projection. It localises to the cilium. The protein resides in the dynein axonemal particle. The protein localises to the flagellum. Involved in dynein arm assembly, is important for expression and transporting outer dynein arm (ODA) proteins from the cytoplasm to the cilia. Acts as a crucial component in the formation and motility of spermatozoal flagella. The protein is Dynein axonemal assembly factor 11 (Dnaaf11) of Mus musculus (Mouse).